A 523-amino-acid polypeptide reads, in one-letter code: Inosine-5'-monophosphate dehydrogenase 2 (523 aa).

2 CBS domains span residues 121 to 183 (FINN…VQDV) and 184 to 240 (MTKN…PLAS). Residues 278–280 (DSS) and 328–330 (GMG) each bind NAD(+). The K(+) site is built by Gly330 and Gly332. Residue Ser333 participates in IMP binding. Cys335 is a binding site for K(+). Cys335 serves as the catalytic Thioimidate intermediate. Residues 368–370 (DGG), 391–392 (GG), and 415–419 (YRGMG) contribute to the IMP site. The Proton acceptor role is filled by Arg437. An IMP-binding site is contributed by Gln449. The K(+) site is built by Glu508, Gly509, and Gly510.

The protein belongs to the IMPDH/GMPR family. Homotetramer. Seems to be able to form heterotetramers composed from more than 1 of the 3 IMPDH gene products (IMD2-4). K(+) is required as a cofactor.

Its subcellular location is the cytoplasm. It catalyses the reaction IMP + NAD(+) + H2O = XMP + NADH + H(+). Its pathway is purine metabolism; XMP biosynthesis via de novo pathway; XMP from IMP: step 1/1. Mycophenolic acid (MPA) is a non-competitive inhibitor that prevents formation of the closed enzyme conformation by binding to the same site as the amobile flap. In contrast, mizoribine monophosphate (MZP) is a competitive inhibitor that induces the closed conformation. MPA is a potent inhibitor of mammalian IMPDHs but a poor inhibitor of the bacterial enzymes. MZP is a more potent inhibitor of bacterial IMPDH. Catalyzes the conversion of inosine 5'-phosphate (IMP) to xanthosine 5'-phosphate (XMP), the first committed and rate-limiting step in the de novo synthesis of guanine nucleotides, and therefore plays an important role in the regulation of cell growth. In contrast to the other IMPDH alleles IMD3 and IMD4, the enzymatic activity of IMD2 seems to be intrinsically drug resistant. This is Inosine-5'-monophosphate dehydrogenase 2 from Saccharomyces cerevisiae (strain ATCC 204508 / S288c) (Baker's yeast).